The chain runs to 88 residues: uncharacterized protein (88 aa).

This is an uncharacterized protein from Sputnik virophage.